The chain runs to 134 residues: Small ribosomal subunit protein uS8c (134 aa).

It belongs to the universal ribosomal protein uS8 family. As to quaternary structure, part of the 30S ribosomal subunit.

The protein localises to the plastid. It is found in the chloroplast. One of the primary rRNA binding proteins, it binds directly to 16S rRNA central domain where it helps coordinate assembly of the platform of the 30S subunit. The polypeptide is Small ribosomal subunit protein uS8c (rps8) (Capsella bursa-pastoris (Shepherd's purse)).